A 450-amino-acid polypeptide reads, in one-letter code: MLTCNECTTWEQFLNYVKTRCSKTAFENWISPIQVLEETQEKIRLEVPNIFVQNYLLDNYKRDLCSFVPLDVHGEPALEFVVAEHKKPSAPVASQKESNEGISEVFEETKDFELKLNLSYRFDNFIEGPSNQFVKSAAVGIAGKPGRSYNPLFIHGGVGLGKTHLLHAVGHYVREHHKNLRIHCITTEAFINDLVYHLKSKSVDKMKNFYRSLDLLLVDDIQFLQNRQNFEEEFCNTFETLINLSKQIVITSDKPPSQLKLSERIIARMEWGLVAHVGIPDLETRVAILQHKAEQKGLLIPNEMAFYIADHIYGNVRQLEGAINKLTAYCRLFGKSLTETTVRETLKELFRSPTKQKISVETILKSVATVFQVKLNDLKGNSRSKDLVLARQIAMYLAKTLITDSLVAIGAAFGKTHSTVLYACKTIEHKLQNDETLKRQVNLCKNHIVG.

The domain I, interacts with DnaA modulators stretch occupies residues 1–87; the sequence is MLTCNECTTW…LEFVVAEHKK (87 aa). The domain II stretch occupies residues 87-114; the sequence is KPSAPVASQKESNEGISEVFEETKDFEL. The interval 115–330 is domain III, AAA+ region; it reads KLNLSYRFDN…GAINKLTAYC (216 aa). Gly159, Gly161, Lys162, and Thr163 together coordinate ATP. The segment at 331–450 is domain IV, binds dsDNA; the sequence is RLFGKSLTET…VNLCKNHIVG (120 aa).

Belongs to the DnaA family. Oligomerizes as a right-handed, spiral filament on DNA at oriC.

It is found in the cytoplasm. Functionally, plays an essential role in the initiation and regulation of chromosomal replication. ATP-DnaA binds to the origin of replication (oriC) to initiate formation of the DNA replication initiation complex once per cell cycle. Binds the DnaA box (a 9 base pair repeat at the origin) and separates the double-stranded (ds)DNA. Forms a right-handed helical filament on oriC DNA; dsDNA binds to the exterior of the filament while single-stranded (ss)DNA is stabiized in the filament's interior. The ATP-DnaA-oriC complex binds and stabilizes one strand of the AT-rich DNA unwinding element (DUE), permitting loading of DNA polymerase. After initiation quickly degrades to an ADP-DnaA complex that is not apt for DNA replication. Binds acidic phospholipids. The protein is Chromosomal replication initiator protein DnaA 2 of Chlamydia pneumoniae (Chlamydophila pneumoniae).